The sequence spans 2151 residues: Protein PRR14L (2151 aa).

2 stretches are compositionally biased toward basic and acidic residues: residues 112 to 123 and 134 to 154; these read KRSESMEPKVFR and EPSE…EEKT. 3 disordered regions span residues 112-160, 206-225, and 314-350; these read KRSE…SQED, GTKT…KDLS, and QLHG…SDLS. At Ser157 the chain carries Phosphoserine. The span at 322–350 shows a compositional bias: polar residues; the sequence is QPSSTHDSPTATSPLKENSEVSCFTSDLS. A phosphoserine mark is found at Ser582 and Ser945. The interval 974 to 1017 is disordered; sequence SNQNRPDECKSEGQSAKEMLSSDQRETVTEPHGEVNHNQKDLLV. The segment covering 996-1013 has biased composition (basic and acidic residues); it reads DQRETVTEPHGEVNHNQK. Ser1029 is subject to Phosphoserine. A compositionally biased stretch (basic and acidic residues) spans 1091–1103; the sequence is DSRSTLSRRELDA. Disordered stretches follow at residues 1091 to 1115, 1178 to 1226, 1782 to 1802, and 1986 to 2012; these read DSRS…DSDF, DSHY…SCHD, TGVH…PLQD, and AACP…KVSQ. Residues 1178–1187 show a composition bias toward polar residues; sequence DSHYGQQDKG. Positions 1188–1201 are enriched in basic and acidic residues; the sequence is TSLRETQEMTEGSR.

This Homo sapiens (Human) protein is Protein PRR14L (PRR14L).